A 220-amino-acid polypeptide reads, in one-letter code: Small ribosomal subunit protein eS8 (220 aa).

Belongs to the eukaryotic ribosomal protein eS8 family.

In Leishmania major, this protein is Small ribosomal subunit protein eS8 (RPS8A).